A 459-amino-acid polypeptide reads, in one-letter code: E3 ubiquitin-protein ligase RNF14 (459 aa).

One can recognise an RWD domain in the interval 10-129 (DELLALASIY…QFLKEETLDF (120 aa)). A disordered region spans residues 141–169 (SGSQPQCEPAQKHAADASGEKSKVQDLDP). Basic and acidic residues predominate over residues 150-169 (AQKHAADASGEKSKVQDLDP). The segment at 200–441 (KAFCCGICYS…NPDSPCYNQL (242 aa)) is TRIAD supradomain. Zn(2+)-binding residues include Cys204, Cys207, Cys222, His224, Cys227, Cys230, Cys249, Cys254, Cys293, Cys298, Cys313, Cys316, Cys321, Cys324, His329, Cys334, Cys388, and Cys391. RING-type zinc fingers lie at residues 204-249 (CGIC…CLNC) and 204-254 (CGIC…EPKC). The IBR-type zinc finger occupies 273–334 (ARYDRLLLQS…RRSYHGLSHC (62 aa)). The RING-type 2; atypical zinc finger occupies 388–417 (CPCCGTNIQKAHGCNKMTCSSCQKYFCWIC). Cys401 is an active-site residue. Cys406, Cys409, Cys414, Cys417, His429, and Cys437 together coordinate Zn(2+).

The protein belongs to the RBR family. RNF14 subfamily.

The protein resides in the cytoplasm. Its subcellular location is the nucleus. It carries out the reaction [E2 ubiquitin-conjugating enzyme]-S-ubiquitinyl-L-cysteine + [acceptor protein]-L-lysine = [E2 ubiquitin-conjugating enzyme]-L-cysteine + [acceptor protein]-N(6)-ubiquitinyl-L-lysine.. It participates in protein modification; protein ubiquitination. Functionally, E3 ubiquitin-protein ligase that plays a key role in the RNF14-RNF25 translation quality control pathway, a pathway that takes place when a ribosome has stalled during translation, and which promotes ubiquitination and degradation of translation factors on stalled ribosomes. Recruited to stalled ribosomes by the ribosome collision sensor GCN1 and mediates 'Lys-6'-linked ubiquitination of target proteins, leading to their degradation. Mediates ubiquitination of eef1a1/eEF1A and etf1/eRF1 translation factors on stalled ribosomes, leading to their degradation. Specifically required to resolve RNA-protein cross-links caused by reactive aldehydes, which trigger translation stress by stalling ribosomes: acts by catalying 'Lys-6'-linked ubiquitination of RNA-protein cross-links, leading to their removal by the ATP-dependent unfoldase VCP and subsequent degradation by the proteasome. Independently of its function in the response to stalled ribosomes, acts as a regulator of transcription in Wnt signaling via its interaction with TCF transcription factors (tcf7/tcf1, tcf7l1/tcf3 and tcf7l2/tcf4). This chain is E3 ubiquitin-protein ligase RNF14, found in Danio rerio (Zebrafish).